Here is a 334-residue protein sequence, read N- to C-terminus: MTNKNQSFGVGQDSMSSMTCLIHVLEAWFGVEHLEDYWNFANYLLWVFTPLLLLILPYFTIFLLYLTIIFLHIYKRKNVLKEAYSHNLWDGARKTVATLWDGHAAVWHGYEVHGMEKIPEEGPALIIFYHGAIPIDFYYFMAKIFIHKGRTCRVVADHFVFKIPGFSLLLDVFCAIHGPREKCVEILQSGHLLAISPGGVREALMSDETYNIVWGNRKGFAQVAIDAKVPIIPMFTQNIREGFRSLGGTRLFRWLYEKFRYPFAPMYGGFPVKLRTYLGDPIPYDPKITAEELAEKTKDAVQALIDKHQRIPGNIMSALLERFRNKQKINQKTL.

Over 1–50 (MTNKNQSFGVGQDSMSSMTCLIHVLEAWFGVEHLEDYWNFANYLLWVFTP) the chain is Lumenal. Asn-5 carries an N-linked (GlcNAc...) asparagine glycan. Residues 51–71 (LLLLILPYFTIFLLYLTIIFL) form a helical membrane-spanning segment. Residues 72–125 (HIYKRKNVLKEAYSHNLWDGARKTVATLWDGHAAVWHGYEVHGMEKIPEEGPAL) lie on the Cytoplasmic side of the membrane. The chain crosses the membrane as a helical span at residues 126–146 (IIFYHGAIPIDFYYFMAKIFI). His-130 is an active-site residue. Residues 147-334 (HKGRTCRVVA…NKQKINQKTL (188 aa)) lie on the Lumenal side of the membrane.

Belongs to the diacylglycerol acyltransferase family. Highly divergent.

The protein localises to the endoplasmic reticulum membrane. It carries out the reaction a 1,2-diacylglycerol + a 1,2-diacyl-sn-glycero-3-phosphocholine = a triacylglycerol + a 1-acyl-sn-glycero-3-phosphocholine. It catalyses the reaction a 1-O-alkyl-2-acyl-sn-glycero-3-phosphocholine + a 1,2-diacylglycerol = a 1-O-alkyl-sn-glycero-3-phosphocholine + a triacylglycerol. The enzyme catalyses a 2-acylglycerol + an acyl-CoA = a 1,2-diacylglycerol + CoA. The catalysed reaction is an acyl-CoA + a 1,2-diacyl-sn-glycerol = a triacyl-sn-glycerol + CoA. It carries out the reaction 2-(9Z-octadecenoyl)-glycerol + (9Z)-octadecenoyl-CoA = 1,2-di-(9Z-octadecenoyl)-glycerol + CoA. It catalyses the reaction 1,2-di-(9Z-octadecenoyl)-sn-glycerol + (9Z)-octadecenoyl-CoA = 1,2,3-tri-(9Z-octadecenoyl)-glycerol + CoA. With respect to regulation, acyltransferase activity is specifically inhibited by TMX1 at the endoplasmic reticulum, restricting accumulation of triacylglycerol. In terms of biological role, catalytic subunit of the alternative triglyceride biosynthesis pathway, which mediates formation of triacylglycerol from diacylglycerol and membrane phospholipids. Synthesizes triacylglycerol at the expense of membrane phospholipids, such as phosphatidylcholine (PC) and its ether-linked form (ePC), thereby altering the composition of membranes. The alternative triglyceride biosynthesis pathway is probably required to provide the energy required for rapid growth when fuel sources are limiting. It maintains mitochondrial function during periods of extracellular lipid starvation. Can also use acyl-CoA as donor: acts as a acyl-CoA:monoacylglycerol acyltransferase (MGAT), but also shows acyl-CoA:diacylglycerol acyltransferase (DGAT) activity. The sequence is that of DGAT1/2-independent enzyme synthesizing storage lipids (TMEM68) from Bos taurus (Bovine).